The chain runs to 916 residues: MLTNIAKKIFGSRNDRLLKQYRKSVARINALEEQMQALSDADLQAKTAEFKQRLADGQTLDGILPEAFAVCREASRRTLGMRHFDVQLIGGMVLHDGKIAEMRTGEGKTLVATLAVYLNALAGKGVHVVTVNDYLASRDAGIMEPLYNFLGLTVGVIISDMQPFDRQNAYAADITYGTNNEFGFDYLRDNMVTDQYDKVQRELNFAVVDEVDSILIDEARTPLIISGQADDNIQLYQIMNTVPPHLVRQETEEGEGDYWVDEKAHQVILSEAGHEHAEQILTQMGLLAENDSLYSAANIALMHHLMAALRAHTLFHKDQHYVIQDGEIVIVDEFTGRLMSGRRWSEGLHQAVEAKEGVEIKRENQTLASITFQNYFRLYTKLSGMTGTADTEAFEFQSIYNLETVIIPTNRPVQRKDFNDQIFRSAEEKFEAVVKDIEECHKRGQPVLVGTTSIENSELVSHLLQKAGLPHNVLNAKEHEREALIVAQAGKVGAITVATNMAGRGTDIVLGGNLKHQTDAIRADEALSDEEKQAQISALEDGWQAEHDKVMEAGGLHIIGTERHESRRIDNQLRGRSGRQGDPGSSRFYLSFEDPLLRLFALDRAAAILNRLAPERGVAIEHNLLTRQIEGAQRKVEGRNFDMRKQVLEYDDVANEQRKVIYSQRNEILTSKDISDLMKEIRSDVVSDLVDTYMPPDSMEEQWDIPTLENRLAAEFRLHEDIQSWLKADNAIDGQDIKERLIERIENEYAAKTELVGKQAMADFERNVMLQVIDNQWREHLAAMDYLRQGIHLRSYAQKNPKQEYKREAFTMFQDLWNGIKFHIASLLTSVQIEQNPVAVVEEQPIGNIQSIHSESPDMEELLGQSQTDLVTEAFNPDGTDFSPEALEARGQIVHRNDPCPCGSGLKYKQCHGKLA.

ATP contacts are provided by residues Gln-87, 105-109 (GEGKT), and Asp-507. Zn(2+) contacts are provided by Cys-900, Cys-902, Cys-911, and His-912.

The protein belongs to the SecA family. In terms of assembly, monomer and homodimer. Part of the essential Sec protein translocation apparatus which comprises SecA, SecYEG and auxiliary proteins SecDF-YajC and YidC. Requires Zn(2+) as cofactor.

The protein resides in the cell inner membrane. It localises to the cytoplasm. It catalyses the reaction ATP + H2O + cellular proteinSide 1 = ADP + phosphate + cellular proteinSide 2.. Part of the Sec protein translocase complex. Interacts with the SecYEG preprotein conducting channel. Has a central role in coupling the hydrolysis of ATP to the transfer of proteins into and across the cell membrane, serving both as a receptor for the preprotein-SecB complex and as an ATP-driven molecular motor driving the stepwise translocation of polypeptide chains across the membrane. The protein is Protein translocase subunit SecA of Neisseria meningitidis serogroup A / serotype 4A (strain DSM 15465 / Z2491).